Here is a 295-residue protein sequence, read N- to C-terminus: Bifunctional protein FolD (295 aa).

Residues 177–179 (GRS) and Ser202 each bind NADP(+).

The protein belongs to the tetrahydrofolate dehydrogenase/cyclohydrolase family. In terms of assembly, homodimer.

The enzyme catalyses (6R)-5,10-methylene-5,6,7,8-tetrahydrofolate + NADP(+) = (6R)-5,10-methenyltetrahydrofolate + NADPH. It carries out the reaction (6R)-5,10-methenyltetrahydrofolate + H2O = (6R)-10-formyltetrahydrofolate + H(+). Its pathway is one-carbon metabolism; tetrahydrofolate interconversion. Its function is as follows. Catalyzes the oxidation of 5,10-methylenetetrahydrofolate to 5,10-methenyltetrahydrofolate and then the hydrolysis of 5,10-methenyltetrahydrofolate to 10-formyltetrahydrofolate. The sequence is that of Bifunctional protein FolD from Psychrobacter arcticus (strain DSM 17307 / VKM B-2377 / 273-4).